The chain runs to 89 residues: Small ribosomal subunit protein uS14 (89 aa).

This sequence belongs to the universal ribosomal protein uS14 family. Part of the 30S ribosomal subunit. Contacts proteins S3 and S10.

In terms of biological role, binds 16S rRNA, required for the assembly of 30S particles and may also be responsible for determining the conformation of the 16S rRNA at the A site. The chain is Small ribosomal subunit protein uS14 from Lacticaseibacillus casei (strain BL23) (Lactobacillus casei).